The following is a 360-amino-acid chain: Phosphoserine aminotransferase (360 aa).

L-glutamate is bound at residue R42. Pyridoxal 5'-phosphate-binding positions include 76–77 (AR), W102, T153, D172, and Q195. K196 is subject to N6-(pyridoxal phosphate)lysine. 237 to 238 (NT) provides a ligand contact to pyridoxal 5'-phosphate.

This sequence belongs to the class-V pyridoxal-phosphate-dependent aminotransferase family. SerC subfamily. As to quaternary structure, homodimer. The cofactor is pyridoxal 5'-phosphate.

It localises to the cytoplasm. The enzyme catalyses O-phospho-L-serine + 2-oxoglutarate = 3-phosphooxypyruvate + L-glutamate. It carries out the reaction 4-(phosphooxy)-L-threonine + 2-oxoglutarate = (R)-3-hydroxy-2-oxo-4-phosphooxybutanoate + L-glutamate. Its pathway is amino-acid biosynthesis; L-serine biosynthesis; L-serine from 3-phospho-D-glycerate: step 2/3. The protein operates within cofactor biosynthesis; pyridoxine 5'-phosphate biosynthesis; pyridoxine 5'-phosphate from D-erythrose 4-phosphate: step 3/5. In terms of biological role, catalyzes the reversible conversion of 3-phosphohydroxypyruvate to phosphoserine and of 3-hydroxy-2-oxo-4-phosphonooxybutanoate to phosphohydroxythreonine. The polypeptide is Phosphoserine aminotransferase (Aliivibrio fischeri (strain ATCC 700601 / ES114) (Vibrio fischeri)).